Reading from the N-terminus, the 598-residue chain is IQ calmodulin-binding motif-containing protein 1 (598 aa).

An interaction with BBS1, BBS8 and BBS9 region spans residues 1 to 157 (MKPAGTDPRI…SLFWLLGGHV (157 aa)). The tract at residues 287-598 (QEVEEQKLHK…MLFIGGTKPP (312 aa)) is interaction with CEP290, BBS1, BBS2, BBS4, BBS5, BBS7, BBS8 and BBS9. IQ domains lie at 294-317 (LHKA…LKKL), 318-338 (PSAV…MMLE), 387-416 (EEKS…SLTE), and 417-437 (YKAA…CRKK). Positions 336–362 (MLELNRQKEEEDLRLKLQLQRQRAMRL) form a coiled coil. An interaction with BBS1, BBS2, BBS4, BBS7, BBS8 and BBS9 region spans residues 530 to 598 (AEGKEPEQFL…MLFIGGTKPP (69 aa)).

As to quaternary structure, interacts with calmodulin. Interacts with CEP290/NPHP6; IQCB1/NPHP5 and CEP290/NPHP6; are proposed to form a functional NPHP5-6 module localized to the centrosome. Interacts with ATXN10. Interacts with NPHP1, INVS, NPHP4 and RPGRIP1L; these interactions likely require additional interactors. Associates with the BBSome complex; interacts with BBS1, BBS2, BBS4, BBS5, BBS7, BBS8 and BBS9. As to expression, localized to the outer segment and connecting cilia of photoreceptor cells.

It localises to the cytoplasm. It is found in the cytoskeleton. Its subcellular location is the microtubule organizing center. The protein resides in the centrosome. Functionally, involved in ciliogenesis. The function in an early step in cilia formation depends on its association with CEP290/NPHP6. Involved in regulation of the BBSome complex integrity, specifically for presence of BBS2 and BBS5 in the complex, and in ciliary targeting of selected BBSome cargos. May play a role in controlling entry of the BBSome complex to cilia possibly implicating CEP290/NPHP6. The protein is IQ calmodulin-binding motif-containing protein 1 (Iqcb1) of Mus musculus (Mouse).